A 172-amino-acid chain; its full sequence is Translationally-controlled tumor protein homolog (172 aa).

Positions 1-172 (MIIYRDCISQ…FKDGLEMEKC (172 aa)) constitute a TCTP domain.

The protein belongs to the TCTP family. In terms of tissue distribution, expressed by the venom gland.

The protein localises to the secreted. Its function is as follows. Venom protein that causes edema, enhances vascular permeability and is likely related to the inflammatory activity of the venom. The sequence is that of Translationally-controlled tumor protein homolog from Crotalus adamanteus (Eastern diamondback rattlesnake).